The chain runs to 341 residues: GTP 3',8-cyclase (341 aa).

Residues 17-235 (TYGRVATDLR…LRTRFELTAE (219 aa)) enclose the Radical SAM core domain. GTP is bound at residue Arg-26. [4Fe-4S] cluster is bound by residues Cys-33 and Cys-37. S-adenosyl-L-methionine is bound at residue Tyr-39. Cys-40 lines the [4Fe-4S] cluster pocket. Arg-77 contacts GTP. Gly-81 provides a ligand contact to S-adenosyl-L-methionine. Thr-108 contributes to the GTP binding site. Ser-132 serves as a coordination point for S-adenosyl-L-methionine. A GTP-binding site is contributed by Lys-169. An S-adenosyl-L-methionine-binding site is contributed by Met-203. [4Fe-4S] cluster is bound by residues Cys-268 and Cys-271. 273–275 (RTR) contributes to the GTP binding site. A [4Fe-4S] cluster-binding site is contributed by Cys-285.

This sequence belongs to the radical SAM superfamily. MoaA family. As to quaternary structure, monomer and homodimer. The cofactor is [4Fe-4S] cluster.

It carries out the reaction GTP + AH2 + S-adenosyl-L-methionine = (8S)-3',8-cyclo-7,8-dihydroguanosine 5'-triphosphate + 5'-deoxyadenosine + L-methionine + A + H(+). The protein operates within cofactor biosynthesis; molybdopterin biosynthesis. Catalyzes the cyclization of GTP to (8S)-3',8-cyclo-7,8-dihydroguanosine 5'-triphosphate. This Streptomyces coelicolor (strain ATCC BAA-471 / A3(2) / M145) protein is GTP 3',8-cyclase.